The primary structure comprises 1223 residues: DNA-directed RNA polymerase subunit beta'' (1223 aa).

The Zn(2+) site is built by cysteine 233, cysteine 307, cysteine 314, and cysteine 317.

It belongs to the RNA polymerase beta' chain family. RpoC2 subfamily. In plastids the minimal PEP RNA polymerase catalytic core is composed of four subunits: alpha, beta, beta', and beta''. When a (nuclear-encoded) sigma factor is associated with the core the holoenzyme is formed, which can initiate transcription. It depends on Zn(2+) as a cofactor.

Its subcellular location is the plastid. The protein resides in the chloroplast. It carries out the reaction RNA(n) + a ribonucleoside 5'-triphosphate = RNA(n+1) + diphosphate. In terms of biological role, DNA-dependent RNA polymerase catalyzes the transcription of DNA into RNA using the four ribonucleoside triphosphates as substrates. This is DNA-directed RNA polymerase subunit beta'' from Mesostigma viride (Green alga).